We begin with the raw amino-acid sequence, 546 residues long: 2-isopropylmalate synthase (546 aa).

Residues 8–271 (ILIFDTTLRD…NSFFKRNPDS (264 aa)) enclose the Pyruvate carboxyltransferase domain. Asp17, His208, His210, and Asn244 together coordinate Mn(2+). The interval 408–546 (QLCLVQVSCG…NKTFLSNPAN (139 aa)) is regulatory domain.

It belongs to the alpha-IPM synthase/homocitrate synthase family. LeuA type 1 subfamily. As to quaternary structure, homodimer. Mn(2+) is required as a cofactor.

It is found in the cytoplasm. It catalyses the reaction 3-methyl-2-oxobutanoate + acetyl-CoA + H2O = (2S)-2-isopropylmalate + CoA + H(+). The protein operates within amino-acid biosynthesis; L-leucine biosynthesis; L-leucine from 3-methyl-2-oxobutanoate: step 1/4. Catalyzes the condensation of the acetyl group of acetyl-CoA with 3-methyl-2-oxobutanoate (2-ketoisovalerate) to form 3-carboxy-3-hydroxy-4-methylpentanoate (2-isopropylmalate). This Prochlorococcus marinus (strain MIT 9312) protein is 2-isopropylmalate synthase.